The chain runs to 469 residues: Probable acetate kinase (469 aa).

N30 serves as a coordination point for Mg(2+). K37 is a binding site for ATP. Residue R122 coordinates substrate. D179 serves as the catalytic Proton donor/acceptor. Position 239-243 (239-243 (HLGSG)) interacts with ATP. E453 serves as a coordination point for Mg(2+).

Belongs to the acetokinase family. The cofactor is Mg(2+).

The catalysed reaction is acetate + ATP = acetyl phosphate + ADP. It functions in the pathway metabolic intermediate biosynthesis; acetyl-CoA biosynthesis; acetyl-CoA from acetate: step 1/2. In Neurospora crassa (strain ATCC 24698 / 74-OR23-1A / CBS 708.71 / DSM 1257 / FGSC 987), this protein is Probable acetate kinase.